Consider the following 240-residue polypeptide: Protein GUCD1 (240 aa).

This is Protein GUCD1 (GUCD1) from Homo sapiens (Human).